The primary structure comprises 500 residues: NAD(P)H-quinone oxidoreductase chain 4, chloroplastic (500 aa).

Helical transmembrane passes span 4–24, 35–55, 87–107, 113–130, 134–154, 167–187, 208–228, 242–262, 272–292, 305–325, 330–350, 386–406, 411–431, and 462–482; these read FPWL…IFFL, YTIC…CYHF, IGPI…AWPI, LFHF…GSFS, LLLF…LLCM, FILY…GVAL, VLEI…SPII, HYST…YGLI, AHSI…IYAA, IAYS…SLTD, GALL…FLAG, LALP…GIIT, LLIP…LTPI, and LFLS…PDFV.

The protein belongs to the complex I subunit 4 family.

It is found in the plastid. The protein resides in the chloroplast thylakoid membrane. It carries out the reaction a plastoquinone + NADH + (n+1) H(+)(in) = a plastoquinol + NAD(+) + n H(+)(out). The catalysed reaction is a plastoquinone + NADPH + (n+1) H(+)(in) = a plastoquinol + NADP(+) + n H(+)(out). In Nicotiana tomentosiformis (Tobacco), this protein is NAD(P)H-quinone oxidoreductase chain 4, chloroplastic.